The following is a 373-amino-acid chain: Ferroptosis suppressor protein 1 (373 aa).

Gly2 is lipidated: N-myristoyl glycine. Residues 7-27 (VESGALHVVIVGGGFGGIAAA) traverse the membrane as a helical segment. 6-hydroxy-FAD is bound by residues 18–22 (GGGFG), Arg54, and Val82. Lys168 is subject to N6-acetyllysine; by KAT2B. Asp285 is a 6-hydroxy-FAD binding site.

The protein belongs to the FAD-dependent oxidoreductase family. In terms of assembly, interacts with importin subunits KPNA2 and IPO5; this interaction likely mediates the translocation into the nucleus upon oxidative stress. It depends on 6-hydroxy-FAD as a cofactor. Post-translationally, N-myristoylation at Gly-2 mediates the recruitment to lipid droplets and plasma membrane, enabling its anti-lipid peroxidation activity. In terms of processing, acetylation at Lys-168 prevents AIFM2 ubiquitination and degradation, thereby inhibiting ferroptosis. KAT2B mediates acetylation at Lys-168, while HDAC3 removes it. Ubiquitinated. AIFM2 undergoes 'Lys-29'-ubiquitination and proteasomal degradation, which is inhibited by acetylation at Lys-168. In terms of tissue distribution, detected in most normal tissues as two transcripts of 1.8 and 4.0 kb in length, respectively. Highly expressed in heart, moderately in liver and skeletal muscles, and expressed at low levels in placenta, lung, kidney, and pancreas. Both transcripts expressed following p53/TP53 induction. The shorter 1.8 kb transcript seems to be the major transcript in EB1 colon cancer cells.

It localises to the lipid droplet. The protein resides in the cell membrane. Its subcellular location is the cytoplasm. It is found in the mitochondrion membrane. The protein localises to the nucleus. It carries out the reaction ubiquinone-10 + NADH + H(+) = ubiquinol-10 + NAD(+). The catalysed reaction is phylloquinone + NADH + H(+) = phylloquinol + NAD(+). It catalyses the reaction menaquinone-4 + NADH + H(+) = menaquinol-4 + NAD(+). The enzyme catalyses menadione + NADH + H(+) = menadiol + NAD(+). The modification by 4-hydroxy-2-nonenal (HNE) adduction in mitochondria results in loss of the oxidoreductase activity and activation of a novel function in mitochondrial oxidative stress signaling. Functionally, a NAD(P)H-dependent oxidoreductase that acts as a key inhibitor of ferroptosis. At the plasma membrane, catalyzes reduction of coenzyme Q/ubiquinone-10 to ubiquinol-10, a lipophilic radical-trapping antioxidant that prevents lipid oxidative damage and consequently ferroptosis. Acts in parallel to GPX4 to suppress phospholipid peroxidation and ferroptosis. This anti-ferroptotic function is independent of cellular glutathione levels. Also acts as a potent radical-trapping antioxidant by mediating warfarin-resistant vitamin K reduction in the canonical vitamin K cycle: catalyzes NAD(P)H-dependent reduction of vitamin K (phylloquinone, menaquinone-4 and menadione) to hydroquinone forms. Hydroquinones act as potent radical-trapping antioxidants inhibitor of phospholipid peroxidation and ferroptosis. May play a role in mitochondrial stress signaling. Upon oxidative stress, associates with the lipid peroxidation end product 4-hydroxy-2-nonenal (HNE) forming a lipid adduct devoid of oxidoreductase activity, which then translocates from mitochondria into the nucleus triggering DNA damage and cell death. Capable of DNA binding in a non-sequence specific way. This is Ferroptosis suppressor protein 1 from Homo sapiens (Human).